Consider the following 370-residue polypeptide: mRNA cap guanine-N(7) methyltransferase 1 (370 aa).

A compositionally biased stretch (low complexity) spans 1–11 (MKRGFSDSPSS). The disordered stretch occupies residues 1–34 (MKRGFSDSPSSSAPPPSSRFKSNPEGDSQFLEDE). Positions 61–341 (SPIIHLKKLN…LYLSFVLRKR (281 aa)) constitute an mRNA cap 0 methyltransferase domain. 70 to 71 (NN) contributes to the mRNA binding site. S-adenosyl-L-methionine is bound by residues Lys74, Ala92, Asp114, 150–151 (DC), and 172–174 (QFA).

The protein belongs to the class I-like SAM-binding methyltransferase superfamily. mRNA cap 0 methyltransferase family.

The protein resides in the nucleus. It catalyses the reaction a 5'-end (5'-triphosphoguanosine)-ribonucleoside in mRNA + S-adenosyl-L-methionine = a 5'-end (N(7)-methyl 5'-triphosphoguanosine)-ribonucleoside in mRNA + S-adenosyl-L-homocysteine. In terms of biological role, mRNA-capping methyltransferase that methylates the N7 position of the added guanosine to the 5'-cap structure of mRNAs. Binds RNA containing 5'-terminal GpppC. The polypeptide is mRNA cap guanine-N(7) methyltransferase 1 (Arabidopsis thaliana (Mouse-ear cress)).